Consider the following 132-residue polypeptide: Interleukin-5 (132 aa).

Residues 1 to 17 form the signal peptide; it reads MRLPLQLSILTLAWVWA. N-linked (GlcNAc...) asparagine glycosylation is found at asparagine 45, asparagine 74, and asparagine 88.

Belongs to the IL-5 family. Homodimer; disulfide-linked. Interacts with IL5RA. Interacts with CSF2RB.

Its subcellular location is the secreted. Homodimeric cytokine expressed predominantly by T-lymphocytes and NK cells that plays an important role in the survival, differentiation, and chemotaxis of eosinophils. Also acts on activated and resting B-cells to induce immunoglobulin production, growth, and differentiation. Mechanistically, exerts its biological effects through a receptor composed of IL5RA subunit and the cytokine receptor common subunit beta/CSF2RB. Binding to the receptor leads to activation of various kinases including LYN, SYK and JAK2 and thereby propagates signals through the RAS-MAPK and JAK-STAT5 pathways respectively. The sequence is that of Interleukin-5 (IL5) from Meriones unguiculatus (Mongolian jird).